A 248-amino-acid chain; its full sequence is ATP synthase subunit a, chloroplastic (248 aa).

The next 5 helical transmembrane spans lie at 37-57, 96-116, 135-155, 200-220, and 221-241; these read AQVL…AFVT, VPFI…GALF, INTT…AGLH, LVVA…MMFL, and GLFT…AYIG.

This sequence belongs to the ATPase A chain family. F-type ATPases have 2 components, CF(1) - the catalytic core - and CF(0) - the membrane proton channel. CF(1) has five subunits: alpha(3), beta(3), gamma(1), delta(1), epsilon(1). CF(0) has four main subunits: a, b, b' and c.

It localises to the plastid. The protein resides in the chloroplast thylakoid membrane. Its function is as follows. Key component of the proton channel; it plays a direct role in the translocation of protons across the membrane. This chain is ATP synthase subunit a, chloroplastic, found in Psilotum nudum (Whisk fern).